Here is a 1742-residue protein sequence, read N- to C-terminus: NACHT and WD repeat domain-containing protein 2 (1742 aa).

5 LRR repeats span residues 386–410 (FYEY…GHIN), 677–698 (LEDV…TRPS), 724–747 (VKNV…LYLQ), 883–906 (YSQE…VTAF), and 925–953 (LPKL…SSMD). An NACHT domain is found at 410–737 (NPLIIYGGPC…TLLVWANRHL (328 aa)). WD repeat units follow at residues 963–1004 (LSSS…LLRQ), 1007–1046 (TAQS…LLSE), 1140–1179 (FSGG…SPQL), 1229–1271 (KHNE…ASLQ), 1272–1311 (EISG…AMSN), 1314–1353 (KTGK…IEAV), 1355–1394 (KHEG…NLFR), 1396–1434 (NGQR…RVCN), 1476–1516 (EDGT…ICRR), 1522–1564 (NFLK…VHAS), and 1614–1653 (SLYK…DAAL).

The protein is NACHT and WD repeat domain-containing protein 2 (NWD2) of Homo sapiens (Human).